Reading from the N-terminus, the 45-residue chain is Large ribosomal subunit protein bL34 (45 aa).

This sequence belongs to the bacterial ribosomal protein bL34 family.

The chain is Large ribosomal subunit protein bL34 from Corynebacterium urealyticum (strain ATCC 43042 / DSM 7109).